The chain runs to 690 residues: Translation initiation factor IF-2 (690 aa).

Residues 178–346 (PRPPVVTVMG…MILLVAEMNE (169 aa)) form the tr-type G domain. The interval 187–194 (GHVDHGKT) is G1. 187–194 (GHVDHGKT) serves as a coordination point for GTP. Residues 212-216 (GITQS) form a G2 region. Residues 233–236 (DTPG) form a G3 region. GTP-binding positions include 233–237 (DTPGH) and 287–290 (NKID). The G4 stretch occupies residues 287-290 (NKID). The tract at residues 324-326 (SAR) is G5.

Belongs to the TRAFAC class translation factor GTPase superfamily. Classic translation factor GTPase family. IF-2 subfamily.

It is found in the cytoplasm. One of the essential components for the initiation of protein synthesis. Protects formylmethionyl-tRNA from spontaneous hydrolysis and promotes its binding to the 30S ribosomal subunits. Also involved in the hydrolysis of GTP during the formation of the 70S ribosomal complex. This is Translation initiation factor IF-2 from Thermotoga sp. (strain RQ2).